Here is a 1158-residue protein sequence, read N- to C-terminus: Hephaestin (1158 aa).

The first 23 residues, 1-23 (MESGHLLWALLFMQSLWPQLTDG), serve as a signal peptide directing secretion. 6 consecutive Plastocyanin-like domains span residues 24–206 (ATRV…LITC), 218–366 (QRQD…VKSC), 370–560 (PPVD…LLVC), 570–718 (KQKG…VSQC), 731–903 (AARI…LAIC), and 911–1067 (HGGR…SRTE). Residues 24-1110 (ATRVYYLGIR…PIKNVEMLAS (1087 aa)) lie on the Extracellular side of the membrane. The Na(+) site is built by glycine 70 and tyrosine 73. 2 residues coordinate Cu(2+): histidine 126 and histidine 128. Histidine 126 contributes to the O2 binding site. Residues lysine 134, aspartate 152, and aspartate 153 each contribute to the Ca(2+) site. Asparagine 164 carries N-linked (GlcNAc...) asparagine glycosylation. The cysteines at positions 180 and 206 are disulfide-linked. Cu(2+)-binding residues include histidine 186 and histidine 188. Position 186 (histidine 186) interacts with O2. Residue asparagine 236 is glycosylated (N-linked (GlcNAc...) asparagine). Residue serine 265 participates in Na(+) binding. Cysteines 285 and 366 form a disulfide. Residues histidine 304, cysteine 347, and histidine 352 each coordinate Cu(2+). The Na(+) site is built by phenylalanine 416, glycine 425, and tyrosine 428. Cysteine 534 and cysteine 560 are oxidised to a cystine. Residue asparagine 588 is glycosylated (N-linked (GlcNAc...) asparagine). Serine 617 lines the Na(+) pocket. An intrachain disulfide couples cysteine 637 to cysteine 718. Positions 656, 699, 704, and 709 each coordinate Cu(2+). N-linked (GlcNAc...) asparagine glycans are attached at residues asparagine 714 and asparagine 758. Phenylalanine 769 and glycine 778 together coordinate Na(+). 2 N-linked (GlcNAc...) asparagine glycosylation sites follow: asparagine 829 and asparagine 873. Cysteine 877 and cysteine 903 are oxidised to a cystine. The N-linked (GlcNAc...) asparagine glycan is linked to asparagine 931. Residues histidine 1000, histidine 1003, histidine 1005, histidine 1045, cysteine 1046, histidine 1047, histidine 1051, and methionine 1056 each contribute to the Cu(2+) site. O2 is bound by residues histidine 1003 and histidine 1005. Histidine 1047 is a binding site for O2. A helical membrane pass occupies residues 1111–1131 (VLVAISVTLLLVVLALGGVVW). Over 1132-1158 (YQHRQRKLRRNRRSILDDSFKLLSFKQ) the chain is Cytoplasmic. Residues serine 1145, serine 1150, and serine 1155 each carry the phosphoserine modification.

Belongs to the multicopper oxidase family. Part of a complex composed of SLC40A1/ferroportin, TF/transferrin and HEPH/hephaestin that transfers iron from cells to transferrin. It depends on Cu cation as a cofactor. Expressed by intestinal absorptive cells (at protein level). Also detected in breast, colon, bone trabecular cells and fibroblasts.

Its subcellular location is the basolateral cell membrane. The enzyme catalyses 4 Fe(2+) + O2 + 4 H(+) = 4 Fe(3+) + 2 H2O. In terms of biological role, plasma membrane ferroxidase that mediates the extracellular conversion of ferrous/Fe(2+) iron into its ferric/Fe(3+) form. Couples ferroportin which specifically exports ferrous/Fe(2+) iron from cells to transferrin that only binds and shuttles extracellular ferric/Fe(3+) iron throughout the body. By helping iron transfer from cells to blood mainly contributes to dietary iron absorption by the intestinal epithelium and more generally regulates iron levels in the body. This Homo sapiens (Human) protein is Hephaestin.